Here is a 647-residue protein sequence, read N- to C-terminus: Putative pre-mRNA-splicing factor ATP-dependent RNA helicase C20H4.09 (647 aa).

In terms of domain architecture, Helicase ATP-binding spans 35-199; sequence LYAVEQNQIT…FGQDKVCTMS (165 aa). 48–55 contributes to the ATP binding site; sequence GHTGCGKT. Positions 146–149 match the DEAH box motif; it reads DEVH. A Helicase C-terminal domain is found at 219 to 398; sequence YVDSAIETVI…PLVLFLKGLG (180 aa).

This sequence belongs to the DEAD box helicase family. DEAH subfamily.

The protein localises to the nucleus. It carries out the reaction ATP + H2O = ADP + phosphate + H(+). In terms of biological role, pre-mRNA processing factor involved in disassembly of spliceosomes after the release of mature mRNA. The sequence is that of Putative pre-mRNA-splicing factor ATP-dependent RNA helicase C20H4.09 from Schizosaccharomyces pombe (strain 972 / ATCC 24843) (Fission yeast).